The primary structure comprises 407 residues: Large ribosomal subunit protein uL4y (407 aa).

Positions 57-96 (PYAVSKKAGHQTSAESWGTGRAVSRIPRVPGGGTHRAGQA) are disordered.

Belongs to the universal ribosomal protein uL4 family.

The sequence is that of Large ribosomal subunit protein uL4y (RPL4D) from Arabidopsis thaliana (Mouse-ear cress).